Here is a 141-residue protein sequence, read N- to C-terminus: Protein X (141 aa).

Residues 24–52 (QSSGPPFPRPAAGSAASSTSSPSPSDESD) are disordered. The segment covering 33-48 (PAAGSAASSTSSPSPS) has biased composition (low complexity). The tract at residues 68–113 (PCCLVFTCADLRTMDSTVNFVSWHAKRQLGMPSKDLWTPYIKDQLL) is mitochondrial targeting sequence.

Belongs to the orthohepadnavirus protein X family. May form homodimer. May interact with host CEBPA, CFLAR, CREB1, DDB1, E4F1, HBXIP, HSPD1/HSP60, NFKBIA, POLR2E and SMAD4. Interacts with host SMC5-SMC6 complex and induces its degradation. Interacts with host TRPC4AP; leading to prevent ubiquitination of TRPC4AP. Interacts with host PLSCR1; this interaction promotes ubiquitination and degradation of HBx and impairs HBx-mediated cell proliferation. Post-translationally, a fraction may be phosphorylated in insect cells and HepG2 cells, a human hepatoblastoma cell line. Phosphorylated in vitro by host protein kinase C or mitogen-activated protein kinase. N-acetylated in insect cells.

The protein resides in the host cytoplasm. Its subcellular location is the host nucleus. It localises to the host mitochondrion. Multifunctional protein that plays a role in silencing host antiviral defenses and promoting viral transcription. Does not seem to be essential for HBV infection. May be directly involved in development of cirrhosis and liver cancer (hepatocellular carcinoma). Most of cytosolic activities involve modulation of cytosolic calcium. The effect on apoptosis is controversial depending on the cell types in which the studies have been conducted. May induce apoptosis by localizing in mitochondria and causing loss of mitochondrial membrane potential. May also modulate apoptosis by binding host CFLAR, a key regulator of the death-inducing signaling complex (DISC). Promotes viral transcription by using the host E3 ubiquitin ligase DDB1 to target the SMC5-SMC6 complex to proteasomal degradation. This host complex would otherwise bind to viral episomal DNA, and prevents its transcription. Moderately stimulates transcription of many different viral and cellular transcription elements. Promoters and enhancers stimulated by HBx contain DNA binding sites for NF-kappa-B, AP-1, AP-2, c-EBP, ATF/CREB, or the calcium-activated factor NF-AT. The sequence is that of Protein X from Marmota monax (Woodchuck).